The following is a 562-amino-acid chain: Dihydroxy-acid dehydratase (562 aa).

Residue D80 coordinates Mg(2+). C121 is a binding site for [2Fe-2S] cluster. Mg(2+) contacts are provided by D122 and K123. K123 carries the N6-carboxylysine modification. C194 contacts [2Fe-2S] cluster. E446 is a binding site for Mg(2+). S472 (proton acceptor) is an active-site residue.

The protein belongs to the IlvD/Edd family. Homodimer. The cofactor is [2Fe-2S] cluster. Mg(2+) serves as cofactor.

It catalyses the reaction (2R)-2,3-dihydroxy-3-methylbutanoate = 3-methyl-2-oxobutanoate + H2O. It carries out the reaction (2R,3R)-2,3-dihydroxy-3-methylpentanoate = (S)-3-methyl-2-oxopentanoate + H2O. It participates in amino-acid biosynthesis; L-isoleucine biosynthesis; L-isoleucine from 2-oxobutanoate: step 3/4. It functions in the pathway amino-acid biosynthesis; L-valine biosynthesis; L-valine from pyruvate: step 3/4. Functions in the biosynthesis of branched-chain amino acids. Catalyzes the dehydration of (2R,3R)-2,3-dihydroxy-3-methylpentanoate (2,3-dihydroxy-3-methylvalerate) into 2-oxo-3-methylpentanoate (2-oxo-3-methylvalerate) and of (2R)-2,3-dihydroxy-3-methylbutanoate (2,3-dihydroxyisovalerate) into 2-oxo-3-methylbutanoate (2-oxoisovalerate), the penultimate precursor to L-isoleucine and L-valine, respectively. This is Dihydroxy-acid dehydratase from Macrococcus caseolyticus (strain JCSC5402) (Macrococcoides caseolyticum).